The following is a 257-amino-acid chain: Ribosomal RNA small subunit methyltransferase J (257 aa).

S-adenosyl-L-methionine contacts are provided by residues 107–108 (RD), 123–124 (ER), and Asp-177.

Belongs to the methyltransferase superfamily. RsmJ family.

Its subcellular location is the cytoplasm. It carries out the reaction guanosine(1516) in 16S rRNA + S-adenosyl-L-methionine = N(2)-methylguanosine(1516) in 16S rRNA + S-adenosyl-L-homocysteine + H(+). Specifically methylates the guanosine in position 1516 of 16S rRNA. The protein is Ribosomal RNA small subunit methyltransferase J of Haemophilus influenzae (strain PittEE).